Consider the following 545-residue polypeptide: Zinc finger protein 697 (545 aa).

A disordered region spans residues Met1–Trp143. Lys2 is covalently cross-linked (Glycyl lysine isopeptide (Lys-Gly) (interchain with G-Cter in SUMO2)). Acidic residues predominate over residues Asp23–Glu36. Positions Asp45–Pro55 are enriched in basic and acidic residues. 2 stretches are compositionally biased toward acidic residues: residues Leu79–Gln94 and Glu118–Gln135. 11 consecutive C2H2-type zinc fingers follow at residues Thr189–His211, Phe261–His283, Asn289–His311, Tyr317–His339, Phe353–His375, His381–His403, Tyr409–His431, Tyr437–His459, Phe465–His487, Tyr493–His515, and His521–His543.

The protein belongs to the krueppel C2H2-type zinc-finger protein family.

It is found in the nucleus. Functionally, RNA-interacting protein with a high number of miRNA targets. Acts as a damage-induced regulator of muscle remodeling by mediating the interferon gamma response in muscle cells. The polypeptide is Zinc finger protein 697 (Homo sapiens (Human)).